A 290-amino-acid polypeptide reads, in one-letter code: MKPSSEEEGELVQGVGPWDECFEVAVQLALRAGQIIRKALTEEKRVSTKTSAADLVTETDHRVEDLIVSELRKRFPSHRFIAEEATASGAKCVLTHSPTWIIDPIDGTCNFVHRFPTVAVSIGFAVHQELEFGVIHHCTEERLYTGRRGQGAFCNGQRLQVSRETDLAKALVLTEIGPKRDPDTLKVFLSNMERLLHAKAHGVRVIGSSTLALCYLASGAADAYYQFGLHCWDLAAATVIIREAGGIVIDTSGGPLDLMSCRVVAAGTREMAVLIAQALQTINYGRDDEK.

The Mg(2+) site is built by Glu-83, Asp-103, Ile-105, and Asp-106. Residue Glu-83 participates in substrate binding. Substrate contacts are provided by residues 105-108 (IDGT), 207-209 (GSS), Gln-226, and Asp-233. Asp-233 lines the Mg(2+) pocket.

This sequence belongs to the inositol monophosphatase superfamily. Homodimer. Mg(2+) is required as a cofactor. In terms of tissue distribution, mostly expressed in brain, small intestine, heart, kidney, and spleen (at protein level).

Its subcellular location is the cytoplasm. The catalysed reaction is a myo-inositol phosphate + H2O = myo-inositol + phosphate. It catalyses the reaction 1D-myo-inositol 1-phosphate + H2O = myo-inositol + phosphate. The enzyme catalyses 1D-myo-inositol 2-phosphate + H2O = myo-inositol + phosphate. It carries out the reaction 1D-myo-inositol 3-phosphate + H2O = myo-inositol + phosphate. The catalysed reaction is 1D-myo-inositol 4-phosphate + H2O = myo-inositol + phosphate. It catalyses the reaction 1D-myo-inositol 5-phosphate + H2O = myo-inositol + phosphate. The enzyme catalyses 1D-myo-inositol 6-phosphate + H2O = myo-inositol + phosphate. It carries out the reaction alpha-D-glucose 1-phosphate + H2O = D-glucose + phosphate. The catalysed reaction is glycerol 2-phosphate + H2O = glycerol + phosphate. It catalyses the reaction adenosine 2'-phosphate + H2O = adenosine + phosphate. It functions in the pathway polyol metabolism; myo-inositol biosynthesis; myo-inositol from D-glucose 6-phosphate: step 2/2. Functionally, phosphatase that can use myo-inositol monophosphates, myo-inositol 1,4-diphosphate, scyllo-inositol-1,4-diphosphate, glucose-1-phosphate, beta-glycerophosphate and 2'-AMP as substrates in vitro. No physiological substrates has been described yet. Has been implicated as the pharmacological target for lithium Li(+) action in brain. The sequence is that of Inositol monophosphatase 2 from Mus musculus (Mouse).